Here is a 127-residue protein sequence, read N- to C-terminus: Translation initiation factor 5A (127 aa).

Lys-35 is subject to Hypusine.

The protein belongs to the eIF-5A family.

It is found in the cytoplasm. Functionally, functions by promoting the formation of the first peptide bond. The chain is Translation initiation factor 5A from Methanospirillum hungatei JF-1 (strain ATCC 27890 / DSM 864 / NBRC 100397 / JF-1).